The following is a 618-amino-acid chain: Nuclear RNA export factor 1 (618 aa).

Positions 1 to 15 are enriched in basic and acidic residues; sequence MADEGKSYNEHDDRV. The segment at 1-113 is disordered; it reads MADEGKSYNE…RGGAGTSQDG (113 aa). At alanine 2 the chain carries N-acetylalanine. A minor non-specific RNA-binding region spans residues 2–59; sequence ADEGKSYNEHDDRVSFPQRRKKGRGPFRWKCGEGNRRSGRGGSGVQSSRFEEDDGDVA. The RNA-binding (RBD) stretch occupies residues 2 to 117; sequence ADEGKSYNEH…GTSQDGTTKN (116 aa). Residues 2 to 197 are interaction with ALYREF/THOC4 and LUZP4; the sequence is ADEGKSYNEH…IIINASAPPY (196 aa). Basic residues predominate over residues 19-28; the sequence is QRRKKGRGPF. At arginine 41 the chain carries Asymmetric dimethylarginine; alternate. The residue at position 41 (arginine 41) is an Omega-N-methylarginine; alternate. The segment at 60-117 is major non-specific RNA-binding; the sequence is MNDPQDGPRVRYNPYTNRPNRRGDGWHDRDRIHITVRRDRAPAERGGAGTSQDGTTKN. Residues 60–117 form an RNA binding region; it reads MNDPQDGPRVRYNPYTNRPNRRGDGWHDRDRIHITVRRDRAPAERGGAGTSQDGTTKN. Positions 66 to 99 match the Nuclear localization signal motif; the sequence is GPRVRYNPYTNRPNRRGDGWHDRDRIHITVRRDR. A compositionally biased stretch (basic and acidic residues) spans 80–102; it reads RRGDGWHDRDRIHITVRRDRAPA. The short motif at 82–109 is the Nuclear export signal element; sequence GDGWHDRDRIHITVRRDRAPAERGGAGT. The RRM domain occupies 118–197; sequence WFKITIPYGR…IIINASAPPY (80 aa). Tyrosine 125 bears the 3'-nitrotyrosine mark. LRR repeat units follow at residues 265-290, 291-314, 315-342, and 343-370; these read ELLS…QKAP, NLKT…IKGL, KLEE…AIRE, and RFPK…TMLP. The region spanning 385–535 is the NTF2 domain; sequence LVLRFLQQYY…LCIVNDELFV (151 aa). A TAP-C domain is found at 564-618; it reads PEQQEMLQAFSTQSGMNLEWSQKCLQDNNWDYTRSAQAFTLLKAKGEIPEVAFMK.

The protein belongs to the NXF family. In terms of assembly, heterodimer (via NTF2 domain) with NXT1. The formation of NXF1-NXT1 heterodimers is required for the NXF1-mediated nuclear mRNA export. Forms a complex with RANBP2/NUP358, NXT1 and RANGAP1. Associates with the exon junction complex (EJC). Associates with the transcription/export (TREX) complex. Found in a mRNA complex with UPF3A and UPF3B. Found in a post-splicing complex with RBM8A, UPF1, UPF2, UPF3A, UPF3B and RNPS1. Interacts (via N-terminus) with DHX9 (via N-terminus); this interaction is direct and negatively regulates NXF1-mediated nuclear export of constitutive transport element (CTE)-containing cellular mRNAs. Interacts with FYTTD1/UIF. Interacts with EIF4A3. Interacts with NUP42. Interacts with ALYREF/THOC4. Interacts with CHTOP. Interacts with FRG1 (via N-terminus). Interacts with LUZP4. Interacts with FMR1; the interaction occurs in a mRNA-dependent and polyribosomes-independent manner in the nucleus. Interacts with CPSF6 (via N-terminus); this interaction is direct. Interacts with RBM15. Interacts with RBM15B. Interacts with MCM3AP; this interaction is not mediated by RNA. Interacts with DDX3X (via C-terminus); this interaction may be partly involved in DDX3X nuclear export and in NXF1 localization to stress granules. Interacts with PABPC1/PABP1. In terms of tissue distribution, expressed ubiquitously.

It is found in the nucleus. The protein resides in the nucleoplasm. The protein localises to the nucleus speckle. It localises to the cytoplasm. Its subcellular location is the nuclear pore complex. It is found in the nucleus envelope. The protein resides in the stress granule. In terms of biological role, involved in the nuclear export of mRNA species bearing retroviral constitutive transport elements (CTE) and in the export of mRNA from the nucleus to the cytoplasm (TAP/NFX1 pathway). The NXF1-NXT1 heterodimer is involved in the export of HSP70 mRNA in conjunction with ALYREF/THOC4 and THOC5 components of the TREX complex. ALYREF/THOC4-bound mRNA is thought to be transferred to the NXF1-NXT1 heterodimer for export. Also involved in nuclear export of m6A-containing mRNAs: interaction between SRSF3 and YTHDC1 facilitates m6A-containing mRNA-binding to both SRSF3 and NXF1, promoting mRNA nuclear export. This Mus musculus (Mouse) protein is Nuclear RNA export factor 1 (Nxf1).